The primary structure comprises 147 residues: Hemoglobin subunit epsilon (147 aa).

The Globin domain occupies 3-147 (HWSAEEKQLI…VAHALARKYH (145 aa)). The heme b site is built by H64 and H93.

Belongs to the globin family. Heterotetramer of two epsilon chains and two alpha chains. Hemoglobin E (Hbe) contains a alpha-A chains while hemoglobin M (Hbm) contains alpha-D chains.

In terms of biological role, beta-type chain found in early embryos. In Gallus gallus (Chicken), this protein is Hemoglobin subunit epsilon (HBE).